Reading from the N-terminus, the 255-residue chain is Ditrans,polycis-undecaprenyl-diphosphate synthase ((2E,6E)-farnesyl-diphosphate specific) (255 aa).

The active site involves aspartate 21. Aspartate 21 is a Mg(2+) binding site. Substrate is bound by residues 22–25 (GNGR), tryptophan 26, arginine 34, histidine 38, and 66–68 (SSE). Asparagine 69 (proton acceptor) is an active-site residue. Residues tryptophan 70, arginine 72, arginine 189, and 195–197 (RIS) each bind substrate. Glutamate 208 serves as a coordination point for Mg(2+).

This sequence belongs to the UPP synthase family. As to quaternary structure, homodimer. Mg(2+) serves as cofactor.

It carries out the reaction 8 isopentenyl diphosphate + (2E,6E)-farnesyl diphosphate = di-trans,octa-cis-undecaprenyl diphosphate + 8 diphosphate. Its function is as follows. Catalyzes the sequential condensation of isopentenyl diphosphate (IPP) with (2E,6E)-farnesyl diphosphate (E,E-FPP) to yield (2Z,6Z,10Z,14Z,18Z,22Z,26Z,30Z,34E,38E)-undecaprenyl diphosphate (di-trans,octa-cis-UPP). UPP is the precursor of glycosyl carrier lipid in the biosynthesis of bacterial cell wall polysaccharide components such as peptidoglycan and lipopolysaccharide. The chain is Ditrans,polycis-undecaprenyl-diphosphate synthase ((2E,6E)-farnesyl-diphosphate specific) from Xylella fastidiosa (strain Temecula1 / ATCC 700964).